The following is a 610-amino-acid chain: MKRKLDANDVPSTEANEAEEVKGADRDEDFETLNLDPRLRQALVKEKFSKPTPVQAKAIPLALEGKDILARAKTGSGKTAAYVLPILQTILQKKAIDPSMKATTGLILVPTRELAEQVQKVITTFAAFCGKDVRSVNLTQKVSDAVQKAMLADYPDIVVSTPARVIANLGTSALSLENLTHLVIDEADLVLSYGYEDDINALSKAIPRGVQTFLMSATLTAEVDTLKGLFCRSPVILKLEDKDDHGAGVSQFVVKCAEDEKFLLTYVIFKLQLIKGKVIIFVGDIDRSYRLKLFLEQFGIKSCILNSELPVNSRIHVVEEFNKGVYDIIIAADEQEVLGVSKSRKSKDATEGDDELLSDEDEETSAKAASTRTDKRRKLSSKEKDYGISRGIDFQNVACVLNFDLPTSSKSYTHRIGRTGRGGKTGMALSFVIPADKYGKHKPTSISSAKHDEAVLAKIIKRQAKLGHEVKPYHFDMTQVDAFRYRMSDALRAITRLAIQEARAREIRQELVKSEKLKRHFEENPEELRQLRHDGELRAARIQPHLKHIPEYLMPAKGKKGISNEDVGFVSLRKTGPENRIRKARDRNRGRGKKPGRKIDPLKTFNRGRK.

The disordered stretch occupies residues 1–30 (MKRKLDANDVPSTEANEAEEVKGADRDEDF). The Q motif signature appears at 28–56 (EDFETLNLDPRLRQALVKEKFSKPTPVQA). The Helicase ATP-binding domain occupies 59–237 (IPLALEGKDI…GLFCRSPVIL (179 aa)). Residue 72 to 79 (AKTGSGKT) participates in ATP binding. The DEAD box motif lies at 185–188 (DEAD). In terms of domain architecture, Helicase C-terminal spans 248–478 (GVSQFVVKCA…EVKPYHFDMT (231 aa)). 2 disordered regions span residues 349–380 (ATEG…RKLS) and 569–610 (FVSL…RGRK). Positions 351–363 (EGDDELLSDEDEE) are enriched in acidic residues. Over residues 582-596 (RKARDRNRGRGKKPG) the composition is skewed to basic residues.

The protein belongs to the DEAD box helicase family. DDX56/DBP9 subfamily.

It localises to the nucleus. The protein localises to the nucleolus. The enzyme catalyses ATP + H2O = ADP + phosphate + H(+). Functionally, ATP-binding RNA helicase involved in the biogenesis of 60S ribosomal subunits and is required for the normal formation of 25S and 5.8S rRNAs. The sequence is that of ATP-dependent RNA helicase dbp9 (dbp9) from Emericella nidulans (strain FGSC A4 / ATCC 38163 / CBS 112.46 / NRRL 194 / M139) (Aspergillus nidulans).